The chain runs to 528 residues: Adhesion G-protein coupled receptor G5 (528 aa).

The first 21 residues, 1-21, serve as a signal peptide directing secretion; the sequence is MDHCGALFLCLCLLTLQNATT. Residues 22–245 are Extracellular-facing; the sequence is ETWEELLSYM…SPALVPAELL (224 aa). Asparagine 58, asparagine 65, asparagine 146, asparagine 147, asparagine 173, and asparagine 179 each carry an N-linked (GlcNAc...) asparagine glycan. Positions 78–239 constitute a GAIN-B domain; sequence FKLSCDFSGL…AVLMQLSPAL (162 aa). 2 disulfide bridges follow: cysteine 189–cysteine 221 and cysteine 209–cysteine 223. A GPS region spans residues 189-239; sequence CVFWKEGARKQPWGGWSPEGCRTEQPSHSQVLCRCNHLTYFAVLMQLSPAL. Residues 228–236 form a stachel region; that stretch reads YFAVLMQLS. A helical membrane pass occupies residues 246-271; that stretch reads APLTYISLVGCSISIVASLITVLLHF. Residues 272 to 280 lie on the Cytoplasmic side of the membrane; it reads HFRKQSDSL. The chain crosses the membrane as a helical span at residues 281 to 304; the sequence is TRIHMNLHASVLLLNIAFLLSPAF. Over 305 to 314 the chain is Extracellular; it reads AMSPVPGSAC. Cysteines 314 and 404 form a disulfide. Residues 315 to 340 form a helical membrane-spanning segment; it reads TALAAALHYALLSCLTWMAIEGFNLY. Residues 341–353 lie on the Cytoplasmic side of the membrane; sequence LLLGRVYNIYIRR. The chain crosses the membrane as a helical span at residues 354 to 377; the sequence is YVFKLGVLGWGAPALLVLLSLSVK. The Extracellular portion of the chain corresponds to 378–410; it reads SSVYGPCTIPVFDSWENGTGFQNMSICWVRSPV. N-linked (GlcNAc...) asparagine glycans are attached at residues asparagine 394 and asparagine 400. A helical transmembrane segment spans residues 411–435; it reads VHSVLVMGYGGLTSLFNLVVLAWAL. Residues 436 to 455 lie on the Cytoplasmic side of the membrane; it reads WTLRRLRERADAPSVRACHD. Residues 456-477 traverse the membrane as a helical segment; that stretch reads TVTVLGLTVLLGTTWALAFFSF. Residues 478–481 are Extracellular-facing; sequence GVFL. A helical membrane pass occupies residues 482 to 505; that stretch reads LPQLFLFTILNSLYGFFLFLWFCS. At 506-528 the chain is on the cytoplasmic side; that stretch reads QRCRSEAEAKAQIEAFSSSQTTQ.

This sequence belongs to the G-protein coupled receptor 2 family. Adhesion G-protein coupled receptor (ADGR) subfamily. As to quaternary structure, heterodimer of 2 chains generated by proteolytic processing; the large extracellular N-terminal fragment and the membrane-bound C-terminal fragment predominantly remain associated and non-covalently linked. Autoproteolytically processed at the GPS region of the GAIN-B domain; this cleavage modulates receptor activity. Post-translationally, N-glycsylated. In terms of tissue distribution, expressed in immune cells. Primarily found in granulocytes. Found in eosinophils.

It is found in the cell membrane. With respect to regulation, forms a heterodimer of 2 chains generated by proteolytic processing that remain associated through non-covalent interactions mediated by the GAIN-B domain. In the inactivated receptor, the Stachel sequence (also named stalk) is embedded in the GAIN-B domain, where it adopts a beta-strand conformation. On activation, the Stachel moves into the 7 transmembrane region and adopts a twisted hook-shaped configuration that forms contacts within the receptor, leading to coupling of a G-alpha protein, which activates signaling. The cleaved GAIN-B and N-terminal domains can then dissociate from the rest of the receptor. Orphan adhesion G-protein coupled receptor (aGPCR). Ligand binding causes a conformation change that triggers signaling via guanine nucleotide-binding proteins (G proteins) and modulates the activity of downstream effectors, such as adenylate cyclase. ADGRG5 is specifically coupled to G(s) G proteins and mediates activation of adenylate cyclase activity. This chain is Adhesion G-protein coupled receptor G5, found in Homo sapiens (Human).